The sequence spans 151 residues: Transcriptional repressor NrdR (151 aa).

A zinc finger lies at 3 to 34 (CPYCGYEETRVLDSRVDSSGMTVRRRRECVKC). The ATP-cone domain maps to 49–139 (VFVVKKDGKR…VYKDFREIDQ (91 aa)).

The protein belongs to the NrdR family. It depends on Zn(2+) as a cofactor.

Its function is as follows. Negatively regulates transcription of bacterial ribonucleotide reductase nrd genes and operons by binding to NrdR-boxes. This Thermosipho melanesiensis (strain DSM 12029 / CIP 104789 / BI429) protein is Transcriptional repressor NrdR.